The chain runs to 155 residues: Transcription antitermination protein NusB (155 aa).

It belongs to the NusB family.

In terms of biological role, involved in transcription antitermination. Required for transcription of ribosomal RNA (rRNA) genes. Binds specifically to the boxA antiterminator sequence of the ribosomal RNA (rrn) operons. This chain is Transcription antitermination protein NusB, found in Vibrio parahaemolyticus serotype O3:K6 (strain RIMD 2210633).